We begin with the raw amino-acid sequence, 241 residues long: ATP synthase subunit a (241 aa).

The next 5 helical transmembrane spans lie at 30–50 (GQVFLTSWILLGALLVFISFG), 91–111 (FIGTLFLFVFVSNWGGALIPW), 128–148 (INTTIALALLVSLSYFYAGLS), 193–213 (LVVGVLVFLVPLILPIPVMFL), and 214–234 (GLFTSAIQALIFATLAAYYIG).

The protein belongs to the ATPase A chain family. F-type ATPases have 2 components, CF(1) - the catalytic core - and CF(0) - the membrane proton channel. CF(1) has five subunits: alpha(3), beta(3), gamma(1), delta(1), epsilon(1). CF(0) has four main subunits: a, b, b' and c.

The protein localises to the cellular thylakoid membrane. Functionally, key component of the proton channel; it plays a direct role in the translocation of protons across the membrane. This chain is ATP synthase subunit a, found in Prochlorococcus marinus (strain AS9601).